A 132-amino-acid polypeptide reads, in one-letter code: D-ribose pyranase (132 aa).

The active-site Proton donor is H20. Substrate-binding positions include D28, H99, and 121–123; that span reads YSN.

It belongs to the RbsD / FucU family. RbsD subfamily. Homodecamer.

It is found in the cytoplasm. The enzyme catalyses beta-D-ribopyranose = beta-D-ribofuranose. The protein operates within carbohydrate metabolism; D-ribose degradation; D-ribose 5-phosphate from beta-D-ribopyranose: step 1/2. Its function is as follows. Catalyzes the interconversion of beta-pyran and beta-furan forms of D-ribose. In Lactococcus lactis subsp. cremoris (strain SK11), this protein is D-ribose pyranase.